The sequence spans 280 residues: Bis(5'-nucleosyl)-tetraphosphatase, symmetrical (280 aa).

This sequence belongs to the Ap4A hydrolase family.

It carries out the reaction P(1),P(4)-bis(5'-adenosyl) tetraphosphate + H2O = 2 ADP + 2 H(+). In terms of biological role, hydrolyzes diadenosine 5',5'''-P1,P4-tetraphosphate to yield ADP. The chain is Bis(5'-nucleosyl)-tetraphosphatase, symmetrical from Paracidovorax citrulli (strain AAC00-1) (Acidovorax citrulli).